Reading from the N-terminus, the 215-residue chain is ATP-dependent dethiobiotin synthetase BioD (215 aa).

13–18 (DIGKTV) is an ATP binding site. Residue Thr-17 participates in Mg(2+) binding. Lys-38 is an active-site residue. Thr-42 is a substrate binding site. Residues Asp-50, 115-118 (EGAG), and 175-176 (NH) contribute to the ATP site. Asp-50 and Glu-115 together coordinate Mg(2+).

The protein belongs to the dethiobiotin synthetase family. As to quaternary structure, homodimer. Mg(2+) is required as a cofactor.

It localises to the cytoplasm. It catalyses the reaction (7R,8S)-7,8-diammoniononanoate + CO2 + ATP = (4R,5S)-dethiobiotin + ADP + phosphate + 3 H(+). It participates in cofactor biosynthesis; biotin biosynthesis; biotin from 7,8-diaminononanoate: step 1/2. Functionally, catalyzes a mechanistically unusual reaction, the ATP-dependent insertion of CO2 between the N7 and N8 nitrogen atoms of 7,8-diaminopelargonic acid (DAPA, also called 7,8-diammoniononanoate) to form a ureido ring. This is ATP-dependent dethiobiotin synthetase BioD from Neisseria gonorrhoeae (strain NCCP11945).